The chain runs to 864 residues: Structure-specific endonuclease subunit SLX4 (864 aa).

Disordered regions lie at residues 1 to 21, 49 to 69, 91 to 113, 161 to 190, 289 to 318, 346 to 385, 413 to 433, and 625 to 767; these read MTTQ…PVIP, LSTS…KTQG, TGTG…PGNA, ANQT…GNDH, LSDD…NRPK, TLLS…NEPP, ANGH…ISNS, and KAPN…VTSS. The span at 295–306 shows a compositional bias: polar residues; it reads SSITEDSESATS. A compositionally biased stretch (basic residues) spans 307–318; that stretch reads KPRRVKAKNRPK. The span at 656-668 shows a compositional bias: polar residues; sequence QPNSISQKATTQV. Low complexity predominate over residues 685–695; the sequence is VSSRRSTSTSK. Residues 743–767 are compositionally biased toward polar residues; it reads PESFNLPTTPLTIRSGKVPSTVTSS.

The protein belongs to the SLX4 family. In terms of assembly, forms a heterodimer with SLX1. In terms of processing, phosphorylated in response to DNA damage.

It is found in the nucleus. Functionally, regulatory subunit of the SLX1-SLX4 structure-specific endonuclease that resolves DNA secondary structures generated during DNA repair and recombination. Has endonuclease activity towards branched DNA substrates, introducing single-strand cuts in duplex DNA close to junctions with ss-DNA. This is Structure-specific endonuclease subunit SLX4 from Paracoccidioides lutzii (strain ATCC MYA-826 / Pb01) (Paracoccidioides brasiliensis).